The sequence spans 254 residues: C-X-C motif chemokine 16 (254 aa).

The N-terminal stretch at 1–29 is a signal peptide; the sequence is MGRDLRPGSRVLLLLLLLLLVYLTQPGNG. Residues 30–205 lie on the Extracellular side of the membrane; that stretch reads NEGSVTGSCY…AGPTARTSAT (176 aa). Residues 32 to 107 are chemokine; it reads GSVTGSCYCG…DLKECGHAYS (76 aa). 2 disulfides stabilise this stretch: cysteine 38–cysteine 68 and cysteine 40–cysteine 82. The segment at 146-165 is disordered; sequence QSTQRPTLPVGSLSSDKELT. The N-linked (GlcNAc...) asparagine glycan is linked to asparagine 168. The disordered stretch occupies residues 178-200; that stretch reads SLAAGPEAGENQKQPEKNAGPTA. A helical membrane pass occupies residues 206 to 226; that stretch reads VPVLCLLAIIFILTAALSYVL. Topologically, residues 227–254 are cytoplasmic; that stretch reads CKRRRGQSPQSSPDLPVHYIPVAPDSNT. The disordered stretch occupies residues 231–254; it reads RGQSPQSSPDLPVHYIPVAPDSNT.

It belongs to the intercrine alpha (chemokine CxC) family. Glycosylated. Expressed in T-cell areas. Expressed in spleen, lymph nodes, lung, kidney, small intestine and thymus. Weak expression in heart and liver and no expression in brain and bone marrow.

It is found in the cell membrane. It localises to the secreted. Its function is as follows. Acts as a scavenger receptor on macrophages, which specifically binds to OxLDL (oxidized low density lipoprotein), suggesting that it may be involved in pathophysiology such as atherogenesis. Induces a strong chemotactic response. Induces calcium mobilization. Binds to CXCR6/Bonzo. The sequence is that of C-X-C motif chemokine 16 (CXCL16) from Homo sapiens (Human).